A 235-amino-acid chain; its full sequence is Aspartate/glutamate leucyltransferase (235 aa).

This sequence belongs to the R-transferase family. Bpt subfamily.

The protein localises to the cytoplasm. It carries out the reaction N-terminal L-glutamyl-[protein] + L-leucyl-tRNA(Leu) = N-terminal L-leucyl-L-glutamyl-[protein] + tRNA(Leu) + H(+). The catalysed reaction is N-terminal L-aspartyl-[protein] + L-leucyl-tRNA(Leu) = N-terminal L-leucyl-L-aspartyl-[protein] + tRNA(Leu) + H(+). Its function is as follows. Functions in the N-end rule pathway of protein degradation where it conjugates Leu from its aminoacyl-tRNA to the N-termini of proteins containing an N-terminal aspartate or glutamate. The protein is Aspartate/glutamate leucyltransferase of Pseudomonas syringae pv. tomato (strain ATCC BAA-871 / DC3000).